A 458-amino-acid chain; its full sequence is Cysteine--tRNA ligase (458 aa).

Residue cysteine 29 participates in Zn(2+) binding. Positions 31–41 match the 'HIGH' region motif; it reads PTVYDFLHIGN. Zn(2+)-binding residues include cysteine 211, histidine 236, and glutamate 240. A 'KMSKS' region motif is present at residues 269–273; it reads KMSKS. ATP is bound at residue lysine 272.

Belongs to the class-I aminoacyl-tRNA synthetase family. As to quaternary structure, monomer. Zn(2+) serves as cofactor.

The protein localises to the cytoplasm. It carries out the reaction tRNA(Cys) + L-cysteine + ATP = L-cysteinyl-tRNA(Cys) + AMP + diphosphate. This is Cysteine--tRNA ligase from Beijerinckia indica subsp. indica (strain ATCC 9039 / DSM 1715 / NCIMB 8712).